Reading from the N-terminus, the 318-residue chain is ADP-L-glycero-D-manno-heptose-6-epimerase (318 aa).

NADP(+) is bound by residues 10–11 (FI), 31–32 (DD), K38, K53, and 79–83 (EGACS). Y144 (proton acceptor) is an active-site residue. K148 contributes to the NADP(+) binding site. N173 serves as a coordination point for substrate. Positions 174 and 182 each coordinate NADP(+). K182 functions as the Proton acceptor in the catalytic mechanism. Residues S184, H191, 205–208 (FEGC), R218, and Y282 contribute to the substrate site.

This sequence belongs to the NAD(P)-dependent epimerase/dehydratase family. HldD subfamily. In terms of assembly, homopentamer. NADP(+) is required as a cofactor.

The catalysed reaction is ADP-D-glycero-beta-D-manno-heptose = ADP-L-glycero-beta-D-manno-heptose. Its pathway is nucleotide-sugar biosynthesis; ADP-L-glycero-beta-D-manno-heptose biosynthesis; ADP-L-glycero-beta-D-manno-heptose from D-glycero-beta-D-manno-heptose 7-phosphate: step 4/4. Functionally, catalyzes the interconversion between ADP-D-glycero-beta-D-manno-heptose and ADP-L-glycero-beta-D-manno-heptose via an epimerization at carbon 6 of the heptose. This chain is ADP-L-glycero-D-manno-heptose-6-epimerase, found in Aeromonas hydrophila subsp. hydrophila (strain ATCC 7966 / DSM 30187 / BCRC 13018 / CCUG 14551 / JCM 1027 / KCTC 2358 / NCIMB 9240 / NCTC 8049).